A 770-amino-acid chain; its full sequence is Transducin-like enhancer protein 1 (770 aa).

Residues 1 to 131 form a q domain region; sequence MFPQSRHPTP…IIGQQQLQAQ (131 aa). Disordered regions lie at residues 128-157 and 176-348; these read LQAQ…GIPP and HLAI…PAID. Residues 132-199 are GP domain; sequence HLSHGHGPPV…HHRDREPGTS (68 aa). 2 stretches are compositionally biased toward basic and acidic residues: residues 178 to 196 and 209 to 246; these read AIKD…DREP and RGTD…KSDD. A ccN domain region spans residues 200–268; that stretch reads NSLLVPDSLR…SPRASPAHSP (69 aa). A Nuclear localization signal motif is present at residues 225 to 228; the sequence is KKRK. S239 is modified (phosphoserine). A compositionally biased stretch (low complexity) spans 257-266; that stretch reads PSSPRASPAH. 3 positions are modified to phosphoserine; by CDK1: S259, S263, and S267. Over residues 267–283 the composition is skewed to basic and acidic residues; sequence SPRENGIDKNRLLKKDA. Residues 269-450 are SP domain; the sequence is RENGIDKNRL…GGKPAYSFHV (182 aa). Positions 284–298 are enriched in low complexity; that stretch reads SSSPASTASSASSTS. S286 bears the Phosphoserine mark. A compositionally biased stretch (basic and acidic residues) spans 300-310; sequence KSKEMSLHEKA. 6 WD repeats span residues 470-501, 528-558, 572-602, 614-644, 696-726, and 737-767; these read GIPR…HVYT, NRDN…SIWD, SSAP…AVWD, GHTD…RSWD, LHES…NAWR, and KESS…TVYE.

Belongs to the WD repeat Groucho/TLE family. In terms of assembly, homooligomer and heterooligomer with other family members. Binds RUNX1, RUNX3, FOXA2, KDM6A, UTY, histone H3, HESX1, ESRRG and the NF-kappa-B subunit RELA. Interacts with HES1 (via WRPW motif). Binds TCF7, LEF1, TCF7L1 and TCF7L2. Interacts with SIX3. Interacts with EFNB1. Interacts with TLE4. Interacts with FOXG1/BF-1; the interaction is inhibited by TLE6/GRG6. Phosphorylated, probably by CDK1. The degree of phosphorylation varies throughout the cell cycle, and is highest at the G2/M transition. Becomes hyperphosphorylated in response to cell differentiation and interaction with HES1 or RUNX1. Post-translationally, ubiquitinated by XIAP/BIRC4. As to expression, in all tissues examined, mostly in brain, liver and muscle.

It localises to the nucleus. In terms of biological role, transcriptional corepressor that binds to a number of transcription factors. Inhibits NF-kappa-B-regulated gene expression. Inhibits the transcriptional activation mediated by FOXA2, and by CTNNB1 and TCF family members in Wnt signaling. Enhances FOXG1/BF-1- and HES1-mediated transcriptional repression. The effects of full-length TLE family members may be modulated by association with dominant-negative AES. Unusual function as coactivator for ESRRG. The polypeptide is Transducin-like enhancer protein 1 (TLE1) (Homo sapiens (Human)).